Consider the following 466-residue polypeptide: Exodeoxyribonuclease 7 large subunit (466 aa).

Belongs to the XseA family. In terms of assembly, heterooligomer composed of large and small subunits.

The protein resides in the cytoplasm. It carries out the reaction Exonucleolytic cleavage in either 5'- to 3'- or 3'- to 5'-direction to yield nucleoside 5'-phosphates.. Its function is as follows. Bidirectionally degrades single-stranded DNA into large acid-insoluble oligonucleotides, which are then degraded further into small acid-soluble oligonucleotides. In Vesicomyosocius okutanii subsp. Calyptogena okutanii (strain HA), this protein is Exodeoxyribonuclease 7 large subunit.